Here is a 337-residue protein sequence, read N- to C-terminus: D-alanine--D-alanine ligase (337 aa).

The 201-residue stretch at 126–326 (KQIWISNGLS…YADLVLWLLS (201 aa)) folds into the ATP-grasp domain. 152–207 (VKHLGLPLIVKPAHEGSSLGLTKVKSVEELPAAYQLAAGLDKKVIAETCIVGDELT) lines the ATP pocket. Asp279, Glu293, and Asn295 together coordinate Mg(2+).

It belongs to the D-alanine--D-alanine ligase family. Mg(2+) serves as cofactor. The cofactor is Mn(2+).

The protein resides in the cytoplasm. The enzyme catalyses 2 D-alanine + ATP = D-alanyl-D-alanine + ADP + phosphate + H(+). It functions in the pathway cell wall biogenesis; peptidoglycan biosynthesis. Functionally, cell wall formation. In Polynucleobacter asymbioticus (strain DSM 18221 / CIP 109841 / QLW-P1DMWA-1) (Polynucleobacter necessarius subsp. asymbioticus), this protein is D-alanine--D-alanine ligase.